Consider the following 1099-residue polypeptide: Solute carrier family 12 member 1 (1099 aa).

Topologically, residues 1-177 (MSLNNSSSVF…EDNKAGAVKF (177 aa)) are cytoplasmic. Residues 20–23 (RFQV) carry the RFXV motif motif. Phosphoserine occurs at positions 60 and 90. 4 positions are modified to phosphothreonine: threonine 94, threonine 99, threonine 104, and threonine 117. A Phosphoserine modification is found at serine 119. Serine 129 is subject to Phosphoserine; by AMPK. Serine 147 carries the post-translational modification Phosphoserine. Residues 147 to 169 (SADRVANGEGMPGEEHAENKEED) form a disordered region. Residues 159 to 169 (GEEHAENKEED) are compositionally biased toward basic and acidic residues. The helical transmembrane segment at 178 to 198 (GWVKGVLVRCMLNIWGVMLFI) threads the bilayer. The Extracellular segment spans residues 199-201 (RLS). A helical transmembrane segment spans residues 202-222 (WIVGEAGIGLGVVIILLSTMV). At 223-259 (TSITGLSTSAIATNGFVRGGGAYYLISRSLGPEFGGS) the chain is on the cytoplasmic side. A helical membrane pass occupies residues 260–280 (IGLIFAFANAVAVAMYVVGFA). Residues 281-302 (ETVVDLLKESDSMMVDPTNDIR) are Extracellular-facing. The helical transmembrane segment at 303–323 (IIGSITVVILLGISVAGMEWE) threads the bilayer. Over 324 to 327 (AKAQ) the chain is Cytoplasmic. The chain crosses the membrane as a helical span at residues 328 to 348 (VILLIILLIAIANFFIGTVIP). Residues 349–379 (SNNEKKSRGFFNYQASIFAENFGPSFTKGEG) lie on the Extracellular side of the membrane. A helical membrane pass occupies residues 380-400 (FFSVFAIFFPAATGILAGANI). Over 401–417 (SGDLEDPQDAIPRGTML) the chain is Cytoplasmic. Residues 418–438 (AIFITTVAYIGVAICVGACVV) traverse the membrane as a helical segment. Residues 439–550 (RDATGSMNDT…NNEPLRGYIL (112 aa)) lie on the Extracellular side of the membrane. Residues asparagine 446 and asparagine 456 are each glycosylated (N-linked (GlcNAc...) asparagine). 2 helical membrane-spanning segments follow: residues 551 to 571 (TFVIAMAFILIAELNTIAPII) and 572 to 592 (SNFFLASYALINFSCFHASYA). The Extracellular segment spans residues 593–609 (KSPGWRPAYGIYNMWVS). The chain crosses the membrane as a helical span at residues 610-630 (LFGAVLCCAVMFVINWWAAVI). At 631-1099 (TYVIEFFLYI…NHKNVLTFYS (469 aa)) the chain is on the cytoplasmic side.

Belongs to the SLC12A transporter family. In terms of assembly, when phosphorylated, interacts with PPP3CB. Post-translationally, phosphorylated at Ser-90, Thr-99 and Thr-104 by OXSR1/OSR1 and STK39/SPAK downstream of WNK kinases (WNK1, WNK2, WNK3 or WNK4), promoting its activity. Predominant in kidney. The 3 isoforms are differentially distributed within the kidney: B almost exclusively in cortex, F almost exclusively in medulla, and A about equally distributed.

The protein localises to the apical cell membrane. It catalyses the reaction K(+)(out) + 2 chloride(out) + Na(+)(out) = K(+)(in) + 2 chloride(in) + Na(+)(in). With respect to regulation, activated following phosphorylation by OXSR1/OSR1 and STK39/SPAK downstream of WNK kinases (WNK1, WNK2, WNK3 or WNK4). Functionally, renal sodium, potassium and chloride ion cotransporter that mediates the transepithelial NaCl reabsorption in the thick ascending limb and plays an essential role in the urinary concentration and volume regulation. Electrically silent transporter system. The chain is Solute carrier family 12 member 1 (SLC12A1) from Oryctolagus cuniculus (Rabbit).